A 207-amino-acid polypeptide reads, in one-letter code: Thiamine-phosphate synthase (207 aa).

4-amino-2-methyl-5-(diphosphooxymethyl)pyrimidine-binding positions include 38 to 42 (QYRAK) and Asn-70. Residues Asp-71 and Asp-90 each coordinate Mg(2+). Thr-109 lines the 4-amino-2-methyl-5-(diphosphooxymethyl)pyrimidine pocket. 135-137 (TNS) is a 2-[(2R,5Z)-2-carboxy-4-methylthiazol-5(2H)-ylidene]ethyl phosphate binding site. Lys-138 lines the 4-amino-2-methyl-5-(diphosphooxymethyl)pyrimidine pocket. 2-[(2R,5Z)-2-carboxy-4-methylthiazol-5(2H)-ylidene]ethyl phosphate contacts are provided by residues Gly-165 and 185-186 (IS).

Belongs to the thiamine-phosphate synthase family. The cofactor is Mg(2+).

It catalyses the reaction 2-[(2R,5Z)-2-carboxy-4-methylthiazol-5(2H)-ylidene]ethyl phosphate + 4-amino-2-methyl-5-(diphosphooxymethyl)pyrimidine + 2 H(+) = thiamine phosphate + CO2 + diphosphate. The catalysed reaction is 2-(2-carboxy-4-methylthiazol-5-yl)ethyl phosphate + 4-amino-2-methyl-5-(diphosphooxymethyl)pyrimidine + 2 H(+) = thiamine phosphate + CO2 + diphosphate. The enzyme catalyses 4-methyl-5-(2-phosphooxyethyl)-thiazole + 4-amino-2-methyl-5-(diphosphooxymethyl)pyrimidine + H(+) = thiamine phosphate + diphosphate. It participates in cofactor biosynthesis; thiamine diphosphate biosynthesis; thiamine phosphate from 4-amino-2-methyl-5-diphosphomethylpyrimidine and 4-methyl-5-(2-phosphoethyl)-thiazole: step 1/1. Condenses 4-methyl-5-(beta-hydroxyethyl)thiazole monophosphate (THZ-P) and 2-methyl-4-amino-5-hydroxymethyl pyrimidine pyrophosphate (HMP-PP) to form thiamine monophosphate (TMP). The sequence is that of Thiamine-phosphate synthase from Clostridium perfringens (strain SM101 / Type A).